The chain runs to 164 residues: Lipoprotein signal peptidase (164 aa).

The next 2 helical transmembrane spans lie at 68 to 88 (TILV…LWNA) and 96 to 116 (FWGL…RAMF). Residues D121 and D139 contribute to the active site. The helical transmembrane segment at 134-154 (TFNVADSAIVVGSCLLLIDLL) threads the bilayer.

Belongs to the peptidase A8 family.

Its subcellular location is the cell inner membrane. It carries out the reaction Release of signal peptides from bacterial membrane prolipoproteins. Hydrolyzes -Xaa-Yaa-Zaa-|-(S,diacylglyceryl)Cys-, in which Xaa is hydrophobic (preferably Leu), and Yaa (Ala or Ser) and Zaa (Gly or Ala) have small, neutral side chains.. It participates in protein modification; lipoprotein biosynthesis (signal peptide cleavage). Functionally, this protein specifically catalyzes the removal of signal peptides from prolipoproteins. This chain is Lipoprotein signal peptidase, found in Solibacter usitatus (strain Ellin6076).